The primary structure comprises 162 residues: Beta-carotene hydroxylase (162 aa).

A Fatty acid hydroxylase domain is found at V8–F135.

The protein belongs to the sterol desaturase family.

It carries out the reaction all-trans-beta-carotene + 4 reduced [2Fe-2S]-[ferredoxin] + 2 O2 + 4 H(+) = all-trans-zeaxanthin + 4 oxidized [2Fe-2S]-[ferredoxin] + 2 H2O. Its pathway is carotenoid biosynthesis; astaxanthin biosynthesis. Catalyzes the hydroxylation reaction from beta-carotene to zeaxanthin via beta-cryptoxanthin. This Paracoccus sp. (strain N81106 / MBIC 01143) (Agrobacterium aurantiacum) protein is Beta-carotene hydroxylase (crtZ).